Consider the following 475-residue polypeptide: Ribulose bisphosphate carboxylase large chain (475 aa).

Residues 1-2 (MS) constitute a propeptide that is removed on maturation. Residue proline 3 is modified to N-acetylproline. Lysine 14 bears the N6,N6,N6-trimethyllysine mark. Substrate is bound by residues asparagine 123 and threonine 173. Lysine 175 acts as the Proton acceptor in catalysis. Lysine 177 serves as a coordination point for substrate. 3 residues coordinate Mg(2+): lysine 201, aspartate 203, and glutamate 204. Lysine 201 carries the post-translational modification N6-carboxylysine. Histidine 294 functions as the Proton acceptor in the catalytic mechanism. Substrate is bound by residues arginine 295, histidine 327, and serine 379.

This sequence belongs to the RuBisCO large chain family. Type I subfamily. In terms of assembly, heterohexadecamer of 8 large chains and 8 small chains; disulfide-linked. The disulfide link is formed within the large subunit homodimers. Mg(2+) is required as a cofactor. The disulfide bond which can form in the large chain dimeric partners within the hexadecamer appears to be associated with oxidative stress and protein turnover.

It is found in the plastid. The protein localises to the chloroplast. It catalyses the reaction 2 (2R)-3-phosphoglycerate + 2 H(+) = D-ribulose 1,5-bisphosphate + CO2 + H2O. The catalysed reaction is D-ribulose 1,5-bisphosphate + O2 = 2-phosphoglycolate + (2R)-3-phosphoglycerate + 2 H(+). RuBisCO catalyzes two reactions: the carboxylation of D-ribulose 1,5-bisphosphate, the primary event in carbon dioxide fixation, as well as the oxidative fragmentation of the pentose substrate in the photorespiration process. Both reactions occur simultaneously and in competition at the same active site. This is Ribulose bisphosphate carboxylase large chain from Pinus krempfii (Krempf's pine).